Consider the following 401-residue polypeptide: Exodeoxyribonuclease 7 large subunit (401 aa).

It belongs to the XseA family. Heterooligomer composed of large and small subunits.

Its subcellular location is the cytoplasm. It catalyses the reaction Exonucleolytic cleavage in either 5'- to 3'- or 3'- to 5'-direction to yield nucleoside 5'-phosphates.. Functionally, bidirectionally degrades single-stranded DNA into large acid-insoluble oligonucleotides, which are then degraded further into small acid-soluble oligonucleotides. In Thermoanaerobacter sp. (strain X514), this protein is Exodeoxyribonuclease 7 large subunit.